Here is a 183-residue protein sequence, read N- to C-terminus: Dual-action ribosomal maturation protein DarP (183 aa).

A disordered region spans residues 1–23 (MTKQPDDWLDEVPDNENDDDDDE). A compositionally biased stretch (acidic residues) spans 7-23 (DWLDEVPDNENDDDDDE).

The protein belongs to the DarP family.

The protein localises to the cytoplasm. Functionally, member of a network of 50S ribosomal subunit biogenesis factors which assembles along the 30S-50S interface, preventing incorrect 23S rRNA structures from forming. Promotes peptidyl transferase center (PTC) maturation. In Cronobacter sakazakii (strain ATCC BAA-894) (Enterobacter sakazakii), this protein is Dual-action ribosomal maturation protein DarP.